A 502-amino-acid chain; its full sequence is Lysine--tRNA ligase (502 aa).

Glutamate 413 and glutamate 420 together coordinate Mg(2+).

This sequence belongs to the class-II aminoacyl-tRNA synthetase family. In terms of assembly, homodimer. The cofactor is Mg(2+).

The protein resides in the cytoplasm. It catalyses the reaction tRNA(Lys) + L-lysine + ATP = L-lysyl-tRNA(Lys) + AMP + diphosphate. This chain is Lysine--tRNA ligase, found in Aromatoleum aromaticum (strain DSM 19018 / LMG 30748 / EbN1) (Azoarcus sp. (strain EbN1)).